The primary structure comprises 327 residues: G protein pathway suppressor 2 (327 aa).

The stretch at Met14 to Thr109 forms a coiled coil. The disordered stretch occupies residues Arg26 to Thr65. Residues Lys45 and Lys71 each participate in a glycyl lysine isopeptide (Lys-Gly) (interchain with G-Cter in SUMO1) cross-link. Residues Ser61–Leu94 form an interaction with SUMO region. Disordered regions lie at residues His177 to Gln208 and Gln253 to Lys327. Over residues Gln253–Leu271 the composition is skewed to polar residues. An Asymmetric dimethylarginine modification is found at Arg312. The span at Gln317–Lys327 shows a compositional bias: polar residues. An Asymmetric dimethylarginine; alternate modification is found at Arg323. Arg323 carries the post-translational modification Omega-N-methylarginine; alternate.

In terms of assembly, component of the N-Cor repressor complex, at least composed of NCOR1, NCOR2, HDAC3, TBL1X, TBL1R, CORO2A and GPS2. Interacts (when sumoylated at Lys-71) with TBL1X; leading to protect GPS2 from degradation by the proteasome. Interacts with UBE2N; leading to inhibit UBE2N/Ubc13 activity. Interacts with TRAF1. Interacts with TRAF2. Interacts with TRAF6. Interacts with PPARG (when in the liganded conformation). Interacts with (sumoylated) NR1H2; interaction with sumoylated NR1H2 and NR5A2 onto hepatic acute phase protein promoters prevents N-Cor corepressor complex dissociation. Interacts with (sumoylated) NR5A2; interaction with sumoylated NR1H2 and NR5A2 onto hepatic acute phase protein promoters prevents N-Cor corepressor complex dissociation. Interacts with NR1H3. Interacts with RFX4. Interacts with ANKRD26. As to quaternary structure, (Microbial infection) Interacts (via coiled coil domain) with hepatitis C virus (HCV) NS5A. Sumoylation regulates its subcellular location. Sumoylation at Lys-45 and Lys-71 regulates the shuttling between the cytoplasm and the nucleus. Sumoylation at Lys-71 is required for interaction with TBL1X. Sumoylated at Lys-45 and Lys-71 in mitochondrion. Desumoylation by SENP1 leads to relocation from the mitochondria to the nucleus. Post-translationally, ubiquitinated at the C-terminus by SIAH2; leading to its degradation by the proteasome. Interaction with TBL1X and methylation at Arg-323 protect GPS2 against ubiquitination and degradation. In terms of processing, methylated at Arg-312 and Arg-323 by PRMT6. Methylation at Arg-323 protects from degradation by the proteasome. As to expression, widely expressed.

It localises to the nucleus. The protein resides in the mitochondrion. Its subcellular location is the cytoplasm. It is found in the cytosol. Functionally, key regulator of inflammation, lipid metabolism and mitochondrion homeostasis that acts by inhibiting the activity of the ubiquitin-conjugating enzyme UBE2N/Ubc13, thereby inhibiting 'Lys-63'-linked ubiquitination. In the nucleus, can both acts as a corepressor and coactivator of transcription, depending on the context. Acts as a transcription coactivator in adipocytes by promoting the recruitment of PPARG to promoters: acts by inhibiting the activity of the ubiquitin-conjugating enzyme UBE2N/Ubc13, leading to stabilization of KDM4A and subsequent histone H3 'Lys-9' (H3K9) demethylation. Promotes cholesterol efflux by acting as a transcription coactivator. Acts as a regulator of B-cell development by inhibiting UBE2N/Ubc13, thereby restricting the activation of Toll-like receptors (TLRs) and B-cell antigen receptors (BCRs) signaling pathways. Acts as a key mediator of mitochondrial stress response: in response to mitochondrial depolarization, relocates from the mitochondria to the nucleus following desumoylation and specifically promotes expression of nuclear-encoded mitochondrial genes. Promotes transcription of nuclear-encoded mitochondrial genes by inhibiting UBE2N/Ubc13. Can also act as a corepressor as part of the N-Cor repressor complex by repressing active PPARG. Plays an anti-inflammatory role in macrophages and is required for insulin sensitivity by acting as a corepressor. Plays an anti-inflammatory role during the hepatic acute phase response by interacting with sumoylated NR1H2 and NR5A2 proteins, thereby preventing N-Cor corepressor complex dissociation. In the cytosol, also plays a non-transcriptional role by regulating insulin signaling and pro-inflammatory pathways. In the cytoplasm, acts as a negative regulator of inflammation by inhibiting the pro-inflammatory TNF-alpha pathway; acts by repressing UBE2N/Ubc13 activity. In the cytoplasm of adipocytes, restricts the activation of insulin signaling via inhibition of UBE2N/Ubc13-mediated ubiquitination of AKT. Able to suppress G-protein- and mitogen-activated protein kinase-mediated signal transduction. Acts as a tumor-suppressor in liposarcoma. In terms of biological role, (Microbial infection) Required for efficient replication of hepatitis C virus (HCV) by promoting the interaction between VAPA and HCV virus protein NS5A. The protein is G protein pathway suppressor 2 of Homo sapiens (Human).